A 263-amino-acid polypeptide reads, in one-letter code: HTH-type transcriptional repressor NanR (263 aa).

The segment at methionine 1–serine 24 is disordered. One can recognise an HTH gntR-type domain in the interval lysine 30 to proline 98. Residues glutamate 58 to alanine 77 constitute a DNA-binding region (H-T-H motif).

This sequence belongs to the NanR family.

In terms of biological role, transcriptional repressor that controls expression of the genes required for the catabolism of sialic acids. The protein is HTH-type transcriptional repressor NanR of Escherichia coli O127:H6 (strain E2348/69 / EPEC).